A 289-amino-acid polypeptide reads, in one-letter code: Phosphatidylglycerol--prolipoprotein diacylglyceryl transferase (289 aa).

The next 7 helical transmembrane spans lie at 23 to 43, 61 to 81, 99 to 119, 125 to 145, 199 to 219, 226 to 246, and 259 to 279; these read ALHWYGLMYLVGFVFAMWLAV, LLYMGFLGVFVGGRLGYVLFY, GGMSFHGGLMGVICVMLWFAH, FFQVADFIAPLIPFGLGAGRL, SQLYQMMLEGVALFIILNLFI, GSVSGLFLIGYGTFRIITEFF, and LFSMGQILSLPMVIAGILMMV. Position 144 (Arg144) interacts with a 1,2-diacyl-sn-glycero-3-phospho-(1'-sn-glycerol).

Belongs to the Lgt family.

It localises to the cell inner membrane. It carries out the reaction L-cysteinyl-[prolipoprotein] + a 1,2-diacyl-sn-glycero-3-phospho-(1'-sn-glycerol) = an S-1,2-diacyl-sn-glyceryl-L-cysteinyl-[prolipoprotein] + sn-glycerol 1-phosphate + H(+). It participates in protein modification; lipoprotein biosynthesis (diacylglyceryl transfer). In terms of biological role, catalyzes the transfer of the diacylglyceryl group from phosphatidylglycerol to the sulfhydryl group of the N-terminal cysteine of a prolipoprotein, the first step in the formation of mature lipoproteins. The protein is Phosphatidylglycerol--prolipoprotein diacylglyceryl transferase of Pectobacterium carotovorum subsp. carotovorum (strain PC1).